Consider the following 451-residue polypeptide: UDP-N-acetylmuramoylalanine--D-glutamate ligase (451 aa).

118-124 (GTKGKST) is a binding site for ATP.

The protein belongs to the MurCDEF family.

Its subcellular location is the cytoplasm. The enzyme catalyses UDP-N-acetyl-alpha-D-muramoyl-L-alanine + D-glutamate + ATP = UDP-N-acetyl-alpha-D-muramoyl-L-alanyl-D-glutamate + ADP + phosphate + H(+). The protein operates within cell wall biogenesis; peptidoglycan biosynthesis. Functionally, cell wall formation. Catalyzes the addition of glutamate to the nucleotide precursor UDP-N-acetylmuramoyl-L-alanine (UMA). This Borreliella burgdorferi (strain ZS7) (Borrelia burgdorferi) protein is UDP-N-acetylmuramoylalanine--D-glutamate ligase.